Here is a 270-residue protein sequence, read N- to C-terminus: Capsid maturation protease (270 aa).

Catalysis depends on residues histidine 89, serine 168, and aspartate 191.

The self-cleavage of the C-terminus allows the activation of the protease.

The protein localises to the virion. Functionally, serine protease that is responsible for cleaving many of the prohead proteins during a major morphogenetic step in viral capsid maturation. Cleaves the major capsid protein at 7 [A,G,S]-X-E recognition sites. The protein is Capsid maturation protease of Pseudomonas aeruginosa.